A 277-amino-acid chain; its full sequence is Large ribosomal subunit protein uL2 (277 aa).

The segment at 218–277 (PTVRGSVMNPNDHPHGGGEGKSPIGHPSPLTPWGKPALGYKTRKNKKYSDGMIIKRRGQK) is disordered.

The protein belongs to the universal ribosomal protein uL2 family. Part of the 50S ribosomal subunit. Forms a bridge to the 30S subunit in the 70S ribosome.

Functionally, one of the primary rRNA binding proteins. Required for association of the 30S and 50S subunits to form the 70S ribosome, for tRNA binding and peptide bond formation. It has been suggested to have peptidyltransferase activity; this is somewhat controversial. Makes several contacts with the 16S rRNA in the 70S ribosome. The chain is Large ribosomal subunit protein uL2 from Clostridium novyi (strain NT).